The following is a 1272-amino-acid chain: Myosin-3 (1272 aa).

Residues 1–20 are disordered; the sequence is MAVIKKGARRKDVKEPKKRS. One can recognise a Myosin motor domain in the interval 36–715; that stretch reads VGISDLTLLS…SLFALEDMRD (680 aa). ATP is bound at residue 129 to 136; it reads GESGAGKT. The residue at position 357 (Ser357) is a Phosphoserine. The segment at 588-610 is actin-binding; the sequence is ANELVETLSKAEPSYIRTIKPNQ. IQ domains follow at residues 719-739 and 740-765; these read YNMAARIQRAWRRFLQRRIDA and AIKIQRTIREKKGGNKYVKLRDYGTK. The 191-residue stretch at 771–961 folds into the TH1 domain; sequence KERRSMSLLG…TIYVRRGHPA (191 aa). Disordered stretches follow at residues 951–1015, 1029–1141, and 1217–1272; these read STIY…QKPV, YNPK…SELP, and VQFG…DDDW. A compositionally biased stretch (basic residues) spans 980 to 1000; it reads IKSKKSKHKSTHKHTHSHRSH. The segment covering 1066–1078 has biased composition (low complexity); that stretch reads KKASSSHKSSSAK. Basic and acidic residues predominate over residues 1089-1098; that stretch reads GVEKNKEPLK. A compositionally biased stretch (pro residues) spans 1109 to 1118; sequence PIPPPPPPMG. The SH3 domain occupies 1120–1182; the sequence is PKDPKFEAAY…PTAYMTPYKD (63 aa). The span at 1217–1236 shows a compositional bias: polar residues; sequence VQFGSATVGPTSDNQSNPVG. Over residues 1258–1272 the composition is skewed to acidic residues; sequence ADDDDNDDGDDDDDW.

It belongs to the TRAFAC class myosin-kinesin ATPase superfamily. Myosin family. Interacts (via myosin motor domain) with SHE4; this interaction is important for proper localization and may regulate the interaction of the motor domain with actin. Interacts (via SH3 domain) with VRP1; this interaction is required for localization to sites of polarized growth and may regulate the interaction of the tail domain with actin. Interacts (via SH3 domain) with PAN1; this interaction is important for late stages of endocytopsis. Interacts (via SH3 domain) with BBC1 and LAS17. Interacts (via C-terminal acidic tail) with ARC19 and ARC40; ARC19 and ARC40 are Arp2/3 complex subunits. Phosphorylation of the TEDS site (Ser-357) is required for the polarization of the actin cytoskeleton and for ligand-induced, but not for constitutive internalization of STE2. Phosphorylation probably activates the myosin-I ATPase. Ser-357 is phosphorylated by CLA4 and STE20 in vitro.

It is found in the cytoplasm. The protein localises to the cytoskeleton. The protein resides in the actin patch. Functionally, one of two redundant type-I myosins implicated in the organization of the actin cytoskeleton. Required for proper actin cytoskeleton polarization and for the internalization step in endocytosis. At the cell cortex, assembles in patch-like structures together with proteins from the actin-polymerizing machinery and promotes actin assembly. Functions redundantly with LAS17 as actin nucleation-promoting factor (NPF) for the Arp2/3 complex. Motor domain phosphorylation by PAK kinases CLA4 and STE20 promotes CDC42-regulated actin assembly. Functions together with the NPF PAN1 in late stages of endocytosis. Motor domain phosphorylation by PDK1 kinases PKH1 and PKH2, and by SGK kinases YPK1 and YPK2, promotes ligand-induced, but not constitutive endocytosis of the G protein-coupled receptor STE2. The sequence is that of Myosin-3 (MYO3) from Saccharomyces cerevisiae (strain ATCC 204508 / S288c) (Baker's yeast).